Reading from the N-terminus, the 785-residue chain is Probable serine protease Ga0098714_109514 (785 aa).

Basic and acidic residues-rich tracts occupy residues 470 to 481 and 491 to 501; these read LDHGKNGREGGR and DGPEHPNHYAD. 2 disordered regions span residues 470 to 503 and 608 to 629; these read LDHG…ADID and DGDA…EEVS.

This sequence belongs to the peptidase S1 family.

Probably a dedicated protease for substrate gasdermin bGSDM; cleaves the bGSDM precursor, releasing the pore-forming moiety, which integrates into the membrane and triggers cell death. Involved in defense against bacteriophages. Expression of gasdermin bGSDM and this neighboring protease is toxic in E.coli on solid medium. The polypeptide is Probable serine protease Ga0098714_109514 (Bradyrhizobium tropiciagri).